We begin with the raw amino-acid sequence, 683 residues long: MSTNSRQILVTCALPYANGPIHLGHMLEHIQADIWVRFQRMRGNEIYFVCADDAHGTPIMLKADQMGVKPEQLIADVQQKHMADFNGFNISFDNYHSTHSDENRELVEAIYHKLTQNGFIKTRTISQLFDPEKAMFLPDRFVKGTCPKCKAEDQYGDNCEVCSATYSPIELISPRSTVSGATPVLKESEHFFFDLPAFGAMLTEWIRSGSLQQEVANKMQEWFEAGLQQWDISRDAPYFGFKIPNTDNKYFYVWLDAPIGYMASFKNLCGKKSGIDFDSFWSKESHAELYHFIGKDIMYFHSLFWPAMLDGASLRKPNNIFVHGYVTVNGEKMSKSRGTFIQAATYLKYLDPECLRYYYAAKLGSRIDDLDLNLDDFVQRVNTDLVNKLVNLASRNASFIQKRFDGKLANKLDDKMLFDEFIAQSELIADYYENREFGKAIREIMALTDKANKYVDEKAPWVIAKDESRTDELQQVCSMGIELFRVLIGYLKPVLPNLAARAEAFLNTQLTWENVASPLLDHQIAPFKPLFSRLDMKKIEEMIEASKIENAKANQTAGKSAVENKAFSEFEPIEESITIDDFCKVDLRVAKVLKCEAVPESNKLLKFILDIGNETRQVFSGIKAAYGKPEDLEGRFVIMVANLAPRKMKFGMSEGMILSAGNGGADLYLLDVDAGAKAGQRVK.

Positions 15–25 match the 'HIGH' region motif; that stretch reads PYANGPIHLGH. Residues C146, C149, C159, and C162 each contribute to the Zn(2+) site. The short motif at 332–336 is the 'KMSKS' region element; that stretch reads KMSKS. K335 serves as a coordination point for ATP. In terms of domain architecture, tRNA-binding spans 581 to 683; it reads DFCKVDLRVA…AGAKAGQRVK (103 aa).

This sequence belongs to the class-I aminoacyl-tRNA synthetase family. MetG type 1 subfamily. In terms of assembly, homodimer. It depends on Zn(2+) as a cofactor.

It is found in the cytoplasm. The enzyme catalyses tRNA(Met) + L-methionine + ATP = L-methionyl-tRNA(Met) + AMP + diphosphate. In terms of biological role, is required not only for elongation of protein synthesis but also for the initiation of all mRNA translation through initiator tRNA(fMet) aminoacylation. The polypeptide is Methionine--tRNA ligase (Histophilus somni (strain 2336) (Haemophilus somnus)).